Here is a 396-residue protein sequence, read N- to C-terminus: Enoyl-[acyl-carrier-protein] reductase [NADH] (396 aa).

NAD(+)-binding positions include 48–53 (GASTGY), 74–75 (FE), 111–112 (DA), and 139–140 (LA). Residue Y225 coordinates substrate. Y235 acts as the Proton donor in catalysis. NAD(+) contacts are provided by residues K244 and 273-275 (VVT).

The protein belongs to the TER reductase family. In terms of assembly, monomer.

The enzyme catalyses a 2,3-saturated acyl-[ACP] + NAD(+) = a (2E)-enoyl-[ACP] + NADH + H(+). It participates in lipid metabolism; fatty acid biosynthesis. Functionally, involved in the final reduction of the elongation cycle of fatty acid synthesis (FAS II). Catalyzes the reduction of a carbon-carbon double bond in an enoyl moiety that is covalently linked to an acyl carrier protein (ACP). This chain is Enoyl-[acyl-carrier-protein] reductase [NADH], found in Colwellia psychrerythraea (strain 34H / ATCC BAA-681) (Vibrio psychroerythus).